A 473-amino-acid polypeptide reads, in one-letter code: Adenosylhomocysteinase (473 aa).

The substrate site is built by Thr-60, Asp-135, and Glu-197. Position 198 to 200 (198 to 200) interacts with NAD(+); that stretch reads TTT. Residues Lys-227 and Asp-231 each contribute to the substrate site. NAD(+) is bound by residues Asn-232, 261–266, Glu-284, Asn-319, 340–342, and Asn-385; these read GFGDVG and IGH.

This sequence belongs to the adenosylhomocysteinase family. The cofactor is NAD(+).

The protein resides in the cytoplasm. It carries out the reaction S-adenosyl-L-homocysteine + H2O = L-homocysteine + adenosine. It functions in the pathway amino-acid biosynthesis; L-homocysteine biosynthesis; L-homocysteine from S-adenosyl-L-homocysteine: step 1/1. Its function is as follows. May play a key role in the regulation of the intracellular concentration of adenosylhomocysteine. This is Adenosylhomocysteinase from Bradyrhizobium diazoefficiens (strain JCM 10833 / BCRC 13528 / IAM 13628 / NBRC 14792 / USDA 110).